We begin with the raw amino-acid sequence, 506 residues long: Cysteine--tRNA ligase (506 aa).

A Zn(2+)-binding site is contributed by Cys34. The 'HIGH' region signature appears at 36-46; the sequence is PTVYDFAHIGN. 3 residues coordinate Zn(2+): Cys230, His269, and Glu273. Positions 302 to 306 match the 'KMSKS' region motif; it reads KMSKS. Residue Lys305 participates in ATP binding.

It belongs to the class-I aminoacyl-tRNA synthetase family. As to quaternary structure, monomer. Zn(2+) serves as cofactor.

The protein localises to the cytoplasm. It catalyses the reaction tRNA(Cys) + L-cysteine + ATP = L-cysteinyl-tRNA(Cys) + AMP + diphosphate. This Brucella melitensis biotype 2 (strain ATCC 23457) protein is Cysteine--tRNA ligase.